The primary structure comprises 690 residues: Elongation factor G (690 aa).

The region spanning 8-283 is the tr-type G domain; the sequence is ERYRNFGIMA…AVVDFMPSPL (276 aa). GTP contacts are provided by residues 17–24, 81–85, and 135–138; these read AHIDAGKT, DTPGH, and NKLD.

The protein belongs to the TRAFAC class translation factor GTPase superfamily. Classic translation factor GTPase family. EF-G/EF-2 subfamily.

The protein localises to the cytoplasm. Its function is as follows. Catalyzes the GTP-dependent ribosomal translocation step during translation elongation. During this step, the ribosome changes from the pre-translocational (PRE) to the post-translocational (POST) state as the newly formed A-site-bound peptidyl-tRNA and P-site-bound deacylated tRNA move to the P and E sites, respectively. Catalyzes the coordinated movement of the two tRNA molecules, the mRNA and conformational changes in the ribosome. In Novosphingobium aromaticivorans (strain ATCC 700278 / DSM 12444 / CCUG 56034 / CIP 105152 / NBRC 16084 / F199), this protein is Elongation factor G.